A 335-amino-acid polypeptide reads, in one-letter code: Glyceraldehyde-3-phosphate dehydrogenase 2 (335 aa).

Residues 13-14 (RI), D34, and M79 contribute to the NAD(+) site. D-glyceraldehyde 3-phosphate contacts are provided by residues 151–153 (SCT), T182, 211–212 (TG), and R234. The active-site Nucleophile is C152. N316 provides a ligand contact to NAD(+).

This sequence belongs to the glyceraldehyde-3-phosphate dehydrogenase family. In terms of assembly, homotetramer.

Its subcellular location is the cytoplasm. The catalysed reaction is D-glyceraldehyde 3-phosphate + phosphate + NAD(+) = (2R)-3-phospho-glyceroyl phosphate + NADH + H(+). It functions in the pathway carbohydrate degradation; glycolysis; pyruvate from D-glyceraldehyde 3-phosphate: step 1/5. Functionally, glyceraldehyde-3-phosphate dehydrogenase is a key enzyme in glycolysis that catalyzes the first step of the pathway by converting D-glyceraldehyde 3-phosphate (G3P) into 3-phospho-D-glyceroyl phosphate. In Danio rerio (Zebrafish), this protein is Glyceraldehyde-3-phosphate dehydrogenase 2 (gapdh-2).